Here is a 766-residue protein sequence, read N- to C-terminus: 5-methyltetrahydropteroyltriglutamate--homocysteine methyltransferase (766 aa).

Residues 16–19 (RELK) and lysine 117 contribute to the 5-methyltetrahydropteroyltri-L-glutamate site. L-homocysteine is bound by residues 442 to 444 (IGS) and glutamate 495. L-methionine is bound by residues 442 to 444 (IGS) and glutamate 495. 5-methyltetrahydropteroyltri-L-glutamate-binding positions include 526-527 (RC) and tryptophan 572. L-homocysteine is bound at residue aspartate 610. Aspartate 610 is a binding site for L-methionine. Glutamate 616 contacts 5-methyltetrahydropteroyltri-L-glutamate. 3 residues coordinate Zn(2+): histidine 652, cysteine 654, and glutamate 676. Histidine 705 functions as the Proton donor in the catalytic mechanism. Position 737 (cysteine 737) interacts with Zn(2+).

This sequence belongs to the vitamin-B12 independent methionine synthase family. Requires Zn(2+) as cofactor.

The catalysed reaction is 5-methyltetrahydropteroyltri-L-glutamate + L-homocysteine = tetrahydropteroyltri-L-glutamate + L-methionine. The protein operates within amino-acid biosynthesis; L-methionine biosynthesis via de novo pathway; L-methionine from L-homocysteine (MetE route): step 1/1. Its function is as follows. Catalyzes the transfer of a methyl group from 5-methyltetrahydrofolate to homocysteine resulting in methionine formation. In Bordetella avium (strain 197N), this protein is 5-methyltetrahydropteroyltriglutamate--homocysteine methyltransferase.